The following is a 265-amino-acid chain: Small ribosomal subunit protein uS2 (265 aa).

The tract at residues 231 to 265 (VEEEYEDYEGAEDDYEYDETEYTDSVIPDDEEEAE) is disordered.

Belongs to the universal ribosomal protein uS2 family.

This Trichormus variabilis (strain ATCC 29413 / PCC 7937) (Anabaena variabilis) protein is Small ribosomal subunit protein uS2.